The primary structure comprises 188 residues: Accessory gene regulator protein B (188 aa).

The next 4 helical transmembrane spans lie at 49–69, 100–122, 143–163, and 164–184; these read VALIFHTFLYTLFTHVSYFLV, VYFQVNLGIMYSVVAIGTVLIIY, LLSIIITMVLLIISFLAPEPF, and KQLILLGITLESITLLPIFFP.

This sequence belongs to the AgrB family.

It localises to the cell membrane. Functionally, essential for the production of a quorum sensing system signal molecule, the autoinducing peptide (AIP). This quorum sensing system is responsible for the regulation of the expression of virulence factor genes. Involved in the proteolytic processing of AgrD, the precursor of AIP. The chain is Accessory gene regulator protein B from Staphylococcus haemolyticus (strain JCSC1435).